The following is a 417-amino-acid chain: MLKRDMNIADYDAELWHAMEQEVVRQEEHIELIASENYTSPRVMQAQGSQLTNKYAEGYPGKRYYGGCEYVDVVEQLAIDRAKALFGADYANVQPHSGSQANFAVYTTLLQPGDTVLGMNLAHGGHLTHGSPVNFSGKLYNIVPYGIDESGHIDYDQLAELAKTHQPKMIIGGFSAYSGVVDWARMRQIADSIGAYLFVDMAHVAGLIAAGVYPNPVPHAHVVTTTTHKTLAGPRGGLILAKGGSEELYKKLNSAVFPGAQGGPLMHVIAAKAVALKEAMEPAFKTYQQQVAKNAKAMVEVFLSRGFNVVSGATDNHLFLLDLVDKNLTGKEADAALGRANITVNKNSVPNDPKSPFVTSGMRIGTPAVTRRGFTEADVRDLAGWMCDVLENIHDDAVIERTKNKVLDICDRHPVYA.

Residues Leu-121 and 125–127 (GHL) each bind (6S)-5,6,7,8-tetrahydrofolate. Lys-229 is modified (N6-(pyridoxal phosphate)lysine). 355-357 (SPF) contacts (6S)-5,6,7,8-tetrahydrofolate.

Belongs to the SHMT family. As to quaternary structure, homodimer. Pyridoxal 5'-phosphate serves as cofactor.

The protein localises to the cytoplasm. The enzyme catalyses (6R)-5,10-methylene-5,6,7,8-tetrahydrofolate + glycine + H2O = (6S)-5,6,7,8-tetrahydrofolate + L-serine. It functions in the pathway one-carbon metabolism; tetrahydrofolate interconversion. The protein operates within amino-acid biosynthesis; glycine biosynthesis; glycine from L-serine: step 1/1. In terms of biological role, catalyzes the reversible interconversion of serine and glycine with tetrahydrofolate (THF) serving as the one-carbon carrier. This reaction serves as the major source of one-carbon groups required for the biosynthesis of purines, thymidylate, methionine, and other important biomolecules. Also exhibits THF-independent aldolase activity toward beta-hydroxyamino acids, producing glycine and aldehydes, via a retro-aldol mechanism. The protein is Serine hydroxymethyltransferase of Sodalis glossinidius (strain morsitans).